A 496-amino-acid chain; its full sequence is MSTAQHTSPRTYEVRTYGCQMNVHDSERLTGLLEDAGYVAAPDGQQADVVVFNTCAVRENADNKLYGNLGHLAPVKAATPGMQIAVGGCLAQKDRDTITTRAPWVDVVFGTHNIGSLPALLERARVQDEAQVEILESLEVFPSTLPTRRESAYAAWVSVSVGCNNTCTFCIVPSLRGKEKDRRPGEILAEVEALVADGVSEITLLGQNVNAYGVEFGDRQAFSKLLRACGEVDGLERVRFTSPHPAEFTDDVIAAMAETPNVMPQLHMPLQSGSDKVLRDMRRSYRQRKFLGILERVRAAMPDAAITTDIIVGFPGETEEDFLQTMHVVRAARFSGAFTFQYSKRPGTPAATLPDQVPPEVVKDRYERLVALVNEIAWEENKRLVGRRVELMVAEGEGRKDAATHRLSGRGPDNRLVHFAPPAGVEIRPGDLATVEVTYAAPHHLVADGPVVDVRRTRSGDAWAARNAAPAPSSGVTLGMPTVGAPAPLPDAPACR.

The 117-residue stretch at 10-126 (RTYEVRTYGC…LPALLERARV (117 aa)) folds into the MTTase N-terminal domain. The [4Fe-4S] cluster site is built by C19, C55, C89, C163, C167, and C170. The region spanning 149–380 (RESAYAAWVS…ALVNEIAWEE (232 aa)) is the Radical SAM core domain. The TRAM domain maps to 382 to 451 (KRLVGRRVEL…PHHLVADGPV (70 aa)). The tract at residues 465-496 (ARNAAPAPSSGVTLGMPTVGAPAPLPDAPACR) is disordered. The segment covering 487–496 (APLPDAPACR) has biased composition (pro residues).

The protein belongs to the methylthiotransferase family. MiaB subfamily. Monomer. [4Fe-4S] cluster serves as cofactor.

It is found in the cytoplasm. It catalyses the reaction N(6)-dimethylallyladenosine(37) in tRNA + (sulfur carrier)-SH + AH2 + 2 S-adenosyl-L-methionine = 2-methylsulfanyl-N(6)-dimethylallyladenosine(37) in tRNA + (sulfur carrier)-H + 5'-deoxyadenosine + L-methionine + A + S-adenosyl-L-homocysteine + 2 H(+). Catalyzes the methylthiolation of N6-(dimethylallyl)adenosine (i(6)A), leading to the formation of 2-methylthio-N6-(dimethylallyl)adenosine (ms(2)i(6)A) at position 37 in tRNAs that read codons beginning with uridine. The protein is tRNA-2-methylthio-N(6)-dimethylallyladenosine synthase of Nocardioides sp. (strain ATCC BAA-499 / JS614).